Consider the following 137-residue polypeptide: Small ribosomal subunit protein uS13 (137 aa).

The tract at residues 114–137 is disordered; the sequence is VTQKNARTRKGPRKTIMAKKDKGK. Residues 119–130 show a composition bias toward basic residues; it reads ARTRKGPRKTIM.

Belongs to the universal ribosomal protein uS13 family. As to quaternary structure, part of the 30S ribosomal subunit. Forms a loose heterodimer with protein S19. Forms two bridges to the 50S subunit in the 70S ribosome.

Located at the top of the head of the 30S subunit, it contacts several helices of the 16S rRNA. In the 70S ribosome it contacts the 23S rRNA (bridge B1a) and protein L5 of the 50S subunit (bridge B1b), connecting the 2 subunits; these bridges are implicated in subunit movement. Contacts the tRNAs in the A and P-sites. This is Small ribosomal subunit protein uS13 from Mesomycoplasma hyopneumoniae (strain 232) (Mycoplasma hyopneumoniae).